The chain runs to 402 residues: Probable 2,3-bisphosphoglycerate-independent phosphoglycerate mutase (402 aa).

The protein belongs to the BPG-independent phosphoglycerate mutase family. A-PGAM subfamily.

The enzyme catalyses (2R)-2-phosphoglycerate = (2R)-3-phosphoglycerate. It participates in carbohydrate degradation; glycolysis; pyruvate from D-glyceraldehyde 3-phosphate: step 3/5. Functionally, catalyzes the interconversion of 2-phosphoglycerate and 3-phosphoglycerate. The protein is Probable 2,3-bisphosphoglycerate-independent phosphoglycerate mutase of Thermosipho africanus (strain TCF52B).